The following is a 538-amino-acid chain: Phosphoenolpyruvate carboxykinase (ATP) (538 aa).

Substrate-binding residues include R62, Y203, and K209. Residues K209, H228, and 244-252 (GLSGTGKTT) contribute to the ATP site. Residues K209 and H228 each contribute to the Mn(2+) site. D265 serves as a coordination point for Mn(2+). ATP contacts are provided by residues E293, R329, 445–446 (RI), and T451. R329 is a binding site for substrate.

It belongs to the phosphoenolpyruvate carboxykinase (ATP) family. Monomer. The cofactor is Mn(2+).

The protein localises to the cytoplasm. The enzyme catalyses oxaloacetate + ATP = phosphoenolpyruvate + ADP + CO2. Its pathway is carbohydrate biosynthesis; gluconeogenesis. In terms of biological role, involved in the gluconeogenesis. Catalyzes the conversion of oxaloacetate (OAA) to phosphoenolpyruvate (PEP) through direct phosphoryl transfer between the nucleoside triphosphate and OAA. The polypeptide is Phosphoenolpyruvate carboxykinase (ATP) (Haemophilus ducreyi (strain 35000HP / ATCC 700724)).